We begin with the raw amino-acid sequence, 250 residues long: Serine/arginine-rich splicing factor RS31A (250 aa).

RRM domains follow at residues 2–74 (RHVY…WAKD) and 95–166 (KTLF…YALR). The tract at residues 170–250 (EREDRYAGSR…SRSPIQRARG (81 aa)) is disordered. Basic residues predominate over residues 177–191 (GSRRRRSPSPVYRRR). A phosphoserine mark is found at Ser183, Ser185, Ser201, Ser218, and Ser243. Residues 192 to 230 (PSPDYTRRRSPEYDRYKGPAPYERRKSPDYGRRSSDYGR) are compositionally biased toward basic and acidic residues.

It belongs to the splicing factor SR family. RS subfamily. In terms of assembly, component of the spliceosome. Interacts with MOS14.

Its subcellular location is the nucleus speckle. It is found in the nucleus. It localises to the nucleoplasm. Its function is as follows. Probably involved in intron recognition and spliceosome assembly. The chain is Serine/arginine-rich splicing factor RS31A (RS31A) from Arabidopsis thaliana (Mouse-ear cress).